Consider the following 488-residue polypeptide: E3 ubiquitin-protein ligase TRIM39 (488 aa).

An RING-type zinc finger spans residues 29-70 (CSVCLEYLKEPVIIECGHNFCKACITRWWEDLERDFPCPVCR). A B box-type zinc finger spans residues 102 to 143 (RDESLCSQHHEPLSLFCYEDQEAVCLICAISHTHRAHTVVPM). Zn(2+) contacts are provided by Cys-107, His-110, Cys-129, and His-135. Residues 181 to 250 (ELKRLVESRR…AHLAAEVEGK (70 aa)) adopt a coiled-coil conformation. 2 interaction with CDKN1A regions span residues 268–307 (KCEKVKTMEVTSVSIELEKNFSHFPRQYFALRKILKQLIA) and 359–488 (TSGR…TDWE). The B30.2/SPRY domain occupies 289-484 (SHFPRQYFAL…NAAPLTIRPP (196 aa)).

Belongs to the TRIM/RBCC family. As to quaternary structure, interacts with MOAP1. Interacts with CDKN1A. Post-translationally, autoubiquitinated.

Its subcellular location is the cytoplasm. It is found in the cytosol. The protein localises to the mitochondrion. It localises to the nucleus. The catalysed reaction is S-ubiquitinyl-[E2 ubiquitin-conjugating enzyme]-L-cysteine + [acceptor protein]-L-lysine = [E2 ubiquitin-conjugating enzyme]-L-cysteine + N(6)-ubiquitinyl-[acceptor protein]-L-lysine.. Its pathway is protein modification; protein ubiquitination. Functionally, E3 ubiquitin-protein ligase. May facilitate apoptosis by inhibiting APC/C-Cdh1-mediated poly-ubiquitination and subsequent proteasome-mediated degradation of the pro-apoptotic protein MOAP1. Regulates the G1/S transition of the cell cycle and DNA damage-induced G2 arrest by stabilizing CDKN1A/p21. Positively regulates CDKN1A/p21 stability by competing with DTL for CDKN1A/p21 binding, therefore disrupting DCX(DTL) E3 ubiquitin ligase complex-mediated CDKN1A/p21 ubiquitination and degradation. This chain is E3 ubiquitin-protein ligase TRIM39 (Trim39), found in Rattus norvegicus (Rat).